The following is a 225-amino-acid chain: Germin-like protein 3-1 (225 aa).

An N-terminal signal peptide occupies residues 1–22 (MRAAVAHRILLSLALFAVLCRC). A disulfide bridge links C31 with C51. Positions 65 to 216 (SALSRATNPA…AFKITGQDVQ (152 aa)) constitute a Cupin type-1 domain. A glycan (N-linked (GlcNAc...) asparagine) is linked at N81. H115, H117, E122, and H161 together coordinate Mn(2+).

Belongs to the germin family. In terms of assembly, oligomer (believed to be a pentamer but probably hexamer).

The protein localises to the secreted. Its subcellular location is the extracellular space. The protein resides in the apoplast. Functionally, may play a role in plant defense. Probably has no oxalate oxidase activity even if the active site is conserved. The chain is Germin-like protein 3-1 from Oryza sativa subsp. japonica (Rice).